The chain runs to 208 residues: Somatotropin-B (208 aa).

A signal peptide spans 1 to 25 (MVPGSCSSFGLLVILSFQNVPDVGG). Histidine 44 provides a ligand contact to Zn(2+). A disulfide bridge connects residues cysteine 77 and cysteine 181. Residue glutamate 190 participates in Zn(2+) binding. A disulfide bridge links cysteine 198 with cysteine 206.

It belongs to the somatotropin/prolactin family.

Its subcellular location is the secreted. Its function is as follows. Growth hormone plays an important role in growth control. The protein is Somatotropin-B (gh-b) of Xenopus laevis (African clawed frog).